A 139-amino-acid polypeptide reads, in one-letter code: MTEITETKKEADTPIIPKNTNTTATTTPTTKQQPTKLISDEVEKDTSKVDFTKGGVEEFKFYPDNPKSHRHKYKWSMKEPSKFYDPCEESRMASMDCLYRNQDDKYACQEFFDAYRECRKDFFRKKRQDNRDGAKGWGW.

The span at 1-12 (MTEITETKKEAD) shows a compositional bias: basic and acidic residues. The disordered stretch occupies residues 1–40 (MTEITETKKEADTPIIPKNTNTTATTTPTTKQQPTKLISD). Residues 13–35 (TPIIPKNTNTTATTTPTTKQQPT) are compositionally biased toward low complexity. Residues 84-126 (YDPCEESRMASMDCLYRNQDDKYACQEFFDAYRECRKDFFRKK) enclose the CHCH domain. 2 consecutive short sequence motifs (cx9C motif) follow at residues 87 to 97 (CEESRMASMDC) and 108 to 118 (CQEFFDAYREC). 2 cysteine pairs are disulfide-bonded: Cys-87–Cys-118 and Cys-97–Cys-108.

The protein belongs to the COX23 family.

It is found in the mitochondrion intermembrane space. Required for the assembly of cytochrome c oxidase. The polypeptide is Cytochrome c oxidase-assembly factor COX23, mitochondrial (COX23) (Candida albicans (strain SC5314 / ATCC MYA-2876) (Yeast)).